Reading from the N-terminus, the 576-residue chain is DM7 family protein GD16138 (576 aa).

The interval Phe-454 to Lys-481 is disordered. Positions Leu-457–Glu-478 are enriched in acidic residues.

It belongs to the DM7 family.

The sequence is that of DM7 family protein GD16138 from Drosophila simulans (Fruit fly).